Reading from the N-terminus, the 280-residue chain is uncharacterized protein (280 aa).

A DUF1279 domain is found at 96-208 (DKSIGIFQRF…GYLSTPPPVK (113 aa)). Residues 115 to 135 (VMVPVHIVTSTVWFGSFYYAA) traverse the membrane as a helical segment. Positions 207 to 274 (VKEFLQDKME…KLQETKDKMS (68 aa)) form a coiled coil. The tract at residues 245 to 280 (SERMEETKERFSETKDKFSEKLQETKDKMSFRKKAD) is disordered.

It is found in the membrane. This is an uncharacterized protein from Danio rerio (Zebrafish).